A 195-amino-acid chain; its full sequence is PRELI domain containing protein 3B (195 aa).

The PRELI/MSF1 domain occupies 1–172 (MKIWTSEHVF…VIHKLNAEIE (172 aa)). 2 positions are modified to phosphoserine: Ser46 and Ser51.

The protein belongs to the slowmo family.

This chain is PRELI domain containing protein 3B (Prelid3b), found in Rattus norvegicus (Rat).